The sequence spans 315 residues: Ribosomal RNA small subunit methyltransferase H (315 aa).

Residues 35 to 37 (GGH), Asp-55, Phe-80, Asp-102, and Gln-109 contribute to the S-adenosyl-L-methionine site.

Belongs to the methyltransferase superfamily. RsmH family.

The protein localises to the cytoplasm. The catalysed reaction is cytidine(1402) in 16S rRNA + S-adenosyl-L-methionine = N(4)-methylcytidine(1402) in 16S rRNA + S-adenosyl-L-homocysteine + H(+). Specifically methylates the N4 position of cytidine in position 1402 (C1402) of 16S rRNA. This is Ribosomal RNA small subunit methyltransferase H from Buchnera aphidicola subsp. Baizongia pistaciae (strain Bp).